The chain runs to 885 residues: DNA mismatch repair protein MutS (885 aa).

Residue 626–633 (GPNMGGKS) participates in ATP binding.

The protein belongs to the DNA mismatch repair MutS family.

In terms of biological role, this protein is involved in the repair of mismatches in DNA. It is possible that it carries out the mismatch recognition step. This protein has a weak ATPase activity. The sequence is that of DNA mismatch repair protein MutS from Burkholderia cenocepacia (strain HI2424).